A 488-amino-acid chain; its full sequence is Phenylalanine--tRNA ligase alpha subunit (488 aa).

L-phenylalanine contacts are provided by residues Thr-315, 354 to 356 (QLD), Phe-394, and Phe-419.

The protein belongs to the class-II aminoacyl-tRNA synthetase family. Phe-tRNA synthetase alpha subunit type 2 subfamily. Tetramer of two alpha and two beta subunits. Mg(2+) serves as cofactor.

Its subcellular location is the cytoplasm. The enzyme catalyses tRNA(Phe) + L-phenylalanine + ATP = L-phenylalanyl-tRNA(Phe) + AMP + diphosphate + H(+). This Pyrobaculum arsenaticum (strain DSM 13514 / JCM 11321 / PZ6) protein is Phenylalanine--tRNA ligase alpha subunit.